We begin with the raw amino-acid sequence, 380 residues long: Cytochrome b (380 aa).

A run of 4 helical transmembrane segments spans residues 33–53 (FGSL…FLAM), 77–98 (WLIR…FLHV), 113–133 (WNMG…GYVL), and 178–198 (FFAF…VHLL). The heme b site is built by H83 and H97. 2 residues coordinate heme b: H182 and H196. H201 serves as a coordination point for a ubiquinone. 4 helical membrane-spanning segments follow: residues 226 to 246 (IKDF…TLFF), 288 to 308 (LGGV…PLLH), 320 to 340 (ITQI…WIGG), and 347 to 367 (FITI…IFMP).

The protein belongs to the cytochrome b family. The cytochrome bc1 complex contains 11 subunits: 3 respiratory subunits (MT-CYB, CYC1 and UQCRFS1), 2 core proteins (UQCRC1 and UQCRC2) and 6 low-molecular weight proteins (UQCRH/QCR6, UQCRB/QCR7, UQCRQ/QCR8, UQCR10/QCR9, UQCR11/QCR10 and a cleavage product of UQCRFS1). This cytochrome bc1 complex then forms a dimer. Heme b is required as a cofactor.

The protein resides in the mitochondrion inner membrane. Component of the ubiquinol-cytochrome c reductase complex (complex III or cytochrome b-c1 complex) that is part of the mitochondrial respiratory chain. The b-c1 complex mediates electron transfer from ubiquinol to cytochrome c. Contributes to the generation of a proton gradient across the mitochondrial membrane that is then used for ATP synthesis. The protein is Cytochrome b (MT-CYB) of Microtus oregoni (Creeping vole).